The primary structure comprises 384 residues: tRNA-specific 2-thiouridylase MnmA (384 aa).

Residues 18–25 and leucine 44 each bind ATP; that span reads AMSGGVDS. Residue cysteine 112 is the Nucleophile of the active site. A disulfide bridge connects residues cysteine 112 and cysteine 209. Glycine 136 contacts ATP. The interval 159–161 is interaction with tRNA; it reads RDQ. The active-site Cysteine persulfide intermediate is cysteine 209.

This sequence belongs to the MnmA/TRMU family.

Its subcellular location is the cytoplasm. The enzyme catalyses S-sulfanyl-L-cysteinyl-[protein] + uridine(34) in tRNA + AH2 + ATP = 2-thiouridine(34) in tRNA + L-cysteinyl-[protein] + A + AMP + diphosphate + H(+). Catalyzes the 2-thiolation of uridine at the wobble position (U34) of tRNA, leading to the formation of s(2)U34. This chain is tRNA-specific 2-thiouridylase MnmA, found in Methylobacterium radiotolerans (strain ATCC 27329 / DSM 1819 / JCM 2831 / NBRC 15690 / NCIMB 10815 / 0-1).